The chain runs to 576 residues: Arginine--tRNA ligase (576 aa).

The short motif at 126–136 is the 'HIGH' region element; it reads ANPTGPMHIGH.

This sequence belongs to the class-I aminoacyl-tRNA synthetase family. As to quaternary structure, monomer.

It is found in the cytoplasm. It carries out the reaction tRNA(Arg) + L-arginine + ATP = L-arginyl-tRNA(Arg) + AMP + diphosphate. This is Arginine--tRNA ligase from Rickettsia rickettsii (strain Iowa).